The following is a 436-amino-acid chain: Putative permease MJ0326 (436 aa).

The next 12 helical transmembrane spans lie at 24-44 (LAGITTFMTMAYIIFVNPQIL), 51-71 (FGAVMVATCIASAIATLVMGL), 79-99 (LAPGMGLNAYFTYGVCLGMGI), 103-123 (VALGAVFISGVLFIILTLTKI), 139-159 (TAVGIGLFIAFIGLKSAGIIV), 171-191 (LMEPSTLLALFGIFLTSILVS), 194-214 (VIGAILIGIIVTSLIGMILGI), 235-255 (LDIMGALNLGLLTIVLAFFFV), 322-342 (GFVSVVVAMLFLLSLFFYPVV), 345-365 (IPPYATAAALVIVGALMMRSV), 381-401 (ITLLTIPLTFSIATGLALGFI), and 416-436 (VHWLVYVLAVIFALRFVYLSG).

This sequence belongs to the nucleobase:cation symporter-2 (NCS2) (TC 2.A.40) family. Azg-like subfamily.

The protein localises to the cell membrane. In Methanocaldococcus jannaschii (strain ATCC 43067 / DSM 2661 / JAL-1 / JCM 10045 / NBRC 100440) (Methanococcus jannaschii), this protein is Putative permease MJ0326.